A 156-amino-acid polypeptide reads, in one-letter code: uncharacterized protein (156 aa).

The stretch at 43–84 (LKIDENEVKLEISVEKLKNLSRVCENIEQVVDKVVEELRYAL) forms a coiled coil.

This is an uncharacterized protein from Aquifex aeolicus (strain VF5).